A 177-amino-acid chain; its full sequence is Adenine phosphoribosyltransferase (177 aa).

The protein belongs to the purine/pyrimidine phosphoribosyltransferase family. As to quaternary structure, homodimer.

It localises to the cytoplasm. It carries out the reaction AMP + diphosphate = 5-phospho-alpha-D-ribose 1-diphosphate + adenine. Its pathway is purine metabolism; AMP biosynthesis via salvage pathway; AMP from adenine: step 1/1. Functionally, catalyzes a salvage reaction resulting in the formation of AMP, that is energically less costly than de novo synthesis. This chain is Adenine phosphoribosyltransferase, found in Chlorobium luteolum (strain DSM 273 / BCRC 81028 / 2530) (Pelodictyon luteolum).